Consider the following 1632-residue polypeptide: uncharacterized protein (1632 aa).

Polar residues predominate over residues 1–15 (MSNNKQTAAPAATSN). Positions 1 to 23 (MSNNKQTAAPAATSNEKAENGAE) are disordered. At 1 to 63 (MSNNKQTAAP…TKDAFKGKYR (63 aa)) the chain is on the cytoplasmic side. Residues 64-86 (VFYGNGLHTSIMFGAGTAALDLM) traverse the membrane as a helical segment. Residues 87–1632 (TPGSFLPPFP…ESDGEEMSGE (1546 aa)) are Extracellular-facing. N-linked (GlcNAc...) asparagine; by host glycans are attached at residues Asn149 and Asn274. The interval 516-538 (ELSSQLGDTDTKKEQKEKRSKQG) is disordered. 3 N-linked (GlcNAc...) asparagine; by host glycosylation sites follow: Asn654, Asn719, and Asn797. The interval 838–890 (IKGTKKSDDGDSKTDGSGDMEDDFTSLAKMTNRKRKAGGKDGPSKKKKKDGAD) is disordered. 2 stretches are compositionally biased toward basic and acidic residues: residues 842-853 (KKSDDGDSKTDG) and 875-890 (GGKD…DGAD). 6 N-linked (GlcNAc...) asparagine; by host glycosylation sites follow: Asn1012, Asn1031, Asn1261, Asn1339, Asn1511, and Asn1546. The interval 1603–1632 (PSAMDVDEDEDEDMDDESDDESDGEEMSGE) is disordered. Positions 1607–1632 (DVDEDEDEDMDDESDDESDGEEMSGE) are enriched in acidic residues.

Its subcellular location is the host membrane. This is an uncharacterized protein from Ostreid herpesvirus 1 (isolate France) (OsHV-1).